The primary structure comprises 68 residues: UPF0253 protein ASA_2184 (68 aa).

Belongs to the UPF0253 family.

The chain is UPF0253 protein ASA_2184 from Aeromonas salmonicida (strain A449).